The following is a 916-amino-acid chain: Protein translocase subunit SecA (916 aa).

ATP contacts are provided by residues Gln87, 105 to 109 (GEGKT), and Asp507. Zn(2+) contacts are provided by Cys900, Cys902, Cys911, and His912.

The protein belongs to the SecA family. In terms of assembly, monomer and homodimer. Part of the essential Sec protein translocation apparatus which comprises SecA, SecYEG and auxiliary proteins SecDF-YajC and YidC. The cofactor is Zn(2+).

Its subcellular location is the cell inner membrane. It is found in the cytoplasm. It catalyses the reaction ATP + H2O + cellular proteinSide 1 = ADP + phosphate + cellular proteinSide 2.. Its function is as follows. Part of the Sec protein translocase complex. Interacts with the SecYEG preprotein conducting channel. Has a central role in coupling the hydrolysis of ATP to the transfer of proteins into and across the cell membrane, serving both as a receptor for the preprotein-SecB complex and as an ATP-driven molecular motor driving the stepwise translocation of polypeptide chains across the membrane. The chain is Protein translocase subunit SecA from Neisseria meningitidis serogroup B (strain ATCC BAA-335 / MC58).